The primary structure comprises 109 residues: COX assembly mitochondrial protein 2 (109 aa).

Residues 10–54 enclose the CHCH domain; sequence FHSCLDFINALDKCHQKEYYKRIFGLCNNEKDALNKCLKEASLNN. Short sequence motifs (cx9C motif) lie at residues 13-23 and 36-46; these read CLDFINALDKC and CNNEKDALNKC. Disulfide bonds link C13/C46 and C23/C36.

It belongs to the CMC family. Interacts with CMC1.

Its subcellular location is the mitochondrion inner membrane. The protein localises to the mitochondrion intermembrane space. Its function is as follows. Required for mitochondrial cytochrome c oxidase (COX) assembly and respiration. May be involved in copper trafficking and distribution to mitochondrial COX and SOD1. This is COX assembly mitochondrial protein 2 (CMC2) from Saccharomyces cerevisiae (strain ATCC 204508 / S288c) (Baker's yeast).